The primary structure comprises 970 residues: GEM-interacting protein (970 aa).

Serine 19 carries the phosphoserine modification. Disordered stretches follow at residues 44 to 76 (PLLS…EGPV), 224 to 263 (SEDL…AQAK), and 377 to 478 (PLDI…ENGL). Residues 56–65 (PTATVTNEAS) are compositionally biased toward polar residues. A phosphoserine mark is found at serine 71, serine 231, serine 234, serine 243, serine 437, and serine 441. Residues 81-344 (EELDLRLIRT…CCAPFEPGQR (264 aa)) enclose the F-BAR domain. A compositionally biased stretch (polar residues) spans 231–246 (SQGSPEDSAPQASPGP). Residues 459 to 472 (SSDDFEERDPDLGD) are compositionally biased toward acidic residues. The segment at 493 to 537 (THQLRRLRGPAKCRECEAFMVSGTECEECFLTCHKRCLETLLILC) adopts a Phorbol-ester/DAG-type zinc-finger fold. The Rho-GAP domain maps to 554–757 (LQLPRDFPEE…FLIVHYEQIF (204 aa)). Position 660 is a phosphothreonine (threonine 660). Residues 762-878 (LPQATEPPPQ…PVKYPRGGVR (117 aa)) form a disordered region. The segment covering 766 to 778 (TEPPPQDSSPAPG) has biased composition (pro residues). Positions 815–830 (EQHPTATPTEIPTPQS) are enriched in polar residues. Positions 831–844 (DQREDVAEDTKDGG) are enriched in basic and acidic residues. The span at 847–863 (VSSQGPEDSLLGTQSRG) shows a compositional bias: polar residues. Residues serine 885, serine 907, serine 914, serine 919, and serine 923 each carry the phosphoserine modification. The tract at residues 897-932 (ETPITSVPRGSLRGRGPSPAAASPEGSPLRRTPLPK) is disordered. Low complexity predominate over residues 910 to 923 (GRGPSPAAASPEGS).

In terms of assembly, interacts with GEM through its N-terminal.

Stimulates, in vitro and in vivo, the GTPase activity of RhoA. This chain is GEM-interacting protein (GMIP), found in Homo sapiens (Human).